Reading from the N-terminus, the 41-residue chain is Photosystem I reaction center subunit IX (41 aa).

Residues 7–27 (YLSTAPVVATGWFIVTAALLI) traverse the membrane as a helical segment.

It belongs to the PsaJ family.

The protein localises to the plastid. Its subcellular location is the chloroplast thylakoid membrane. Functionally, may help in the organization of the PsaE and PsaF subunits. This is Photosystem I reaction center subunit IX from Tetradesmus obliquus (Green alga).